Here is a 382-residue protein sequence, read N- to C-terminus: Histidinol-phosphate aminotransferase (382 aa).

The interval 1-28 is disordered; it reads MTSAPRPRPTLDDLPLREDLRGKSPYGA. The span at 9–22 shows a compositional bias: basic and acidic residues; that stretch reads PTLDDLPLREDLRG. An N6-(pyridoxal phosphate)lysine modification is found at K233.

Belongs to the class-II pyridoxal-phosphate-dependent aminotransferase family. Histidinol-phosphate aminotransferase subfamily. In terms of assembly, homodimer. Pyridoxal 5'-phosphate is required as a cofactor.

It catalyses the reaction L-histidinol phosphate + 2-oxoglutarate = 3-(imidazol-4-yl)-2-oxopropyl phosphate + L-glutamate. Its pathway is amino-acid biosynthesis; L-histidine biosynthesis; L-histidine from 5-phospho-alpha-D-ribose 1-diphosphate: step 7/9. The polypeptide is Histidinol-phosphate aminotransferase (Mycobacterium marinum (strain ATCC BAA-535 / M)).